A 120-amino-acid chain; its full sequence is Phosphoribosyl-ATP pyrophosphatase (120 aa).

This sequence belongs to the PRA-PH family.

The protein localises to the cytoplasm. It catalyses the reaction 1-(5-phospho-beta-D-ribosyl)-ATP + H2O = 1-(5-phospho-beta-D-ribosyl)-5'-AMP + diphosphate + H(+). Its pathway is amino-acid biosynthesis; L-histidine biosynthesis; L-histidine from 5-phospho-alpha-D-ribose 1-diphosphate: step 2/9. The chain is Phosphoribosyl-ATP pyrophosphatase from Methylibium petroleiphilum (strain ATCC BAA-1232 / LMG 22953 / PM1).